The following is a 210-amino-acid chain: Fibrillarin-like rRNA/tRNA 2'-O-methyltransferase (210 aa).

The segment at 1 to 34 (MTLPSGVERHDFGGETSLATQGQPVYGERTDGDW) is disordered. S-adenosyl-L-methionine is bound by residues 71–72 (TT), 87–88 (EF), 112–113 (DA), and 132–135 (DVAT).

It belongs to the methyltransferase superfamily. Fibrillarin family. Interacts with nop5. Component of box C/D small ribonucleoprotein (sRNP) particles that contain rpl7ae, FlpA and nop5, plus a guide RNA.

Functionally, involved in pre-rRNA and tRNA processing. Utilizes the methyl donor S-adenosyl-L-methionine to catalyze the site-specific 2'-hydroxyl methylation of ribose moieties in rRNA and tRNA. Site specificity is provided by a guide RNA that base pairs with the substrate. Methylation occurs at a characteristic distance from the sequence involved in base pairing with the guide RNA. The sequence is that of Fibrillarin-like rRNA/tRNA 2'-O-methyltransferase from Haloarcula marismortui (strain ATCC 43049 / DSM 3752 / JCM 8966 / VKM B-1809) (Halobacterium marismortui).